The chain runs to 93 residues: Small ribosomal subunit protein uS19c (93 aa).

Belongs to the universal ribosomal protein uS19 family.

The protein resides in the plastid. The protein localises to the chloroplast. Functionally, protein S19 forms a complex with S13 that binds strongly to the 16S ribosomal RNA. The polypeptide is Small ribosomal subunit protein uS19c (Tetradesmus obliquus (Green alga)).